A 342-amino-acid polypeptide reads, in one-letter code: Nucleoid-associated protein Shewmr7_2293 (342 aa).

This sequence belongs to the YejK family.

It localises to the cytoplasm. It is found in the nucleoid. The protein is Nucleoid-associated protein Shewmr7_2293 of Shewanella sp. (strain MR-7).